The primary structure comprises 402 residues: Ubiquitin-like modifier-activating enzyme 5 (402 aa).

Residues Gly81, Asp102, Lys125, Asn148, and Asn182 each contribute to the ATP site. 2 residues coordinate Zn(2+): Cys224 and Cys227. Cys248 serves as the catalytic Glycyl thioester intermediate. Zn(2+) contacts are provided by Cys301 and Cys306. A disordered region spans residues Glu369–Met402.

Belongs to the ubiquitin-activating E1 family. UBA5 subfamily.

E1-like enzyme which activates UFM1. This Drosophila erecta (Fruit fly) protein is Ubiquitin-like modifier-activating enzyme 5.